Here is a 162-residue protein sequence, read N- to C-terminus: Phosphopantetheine adenylyltransferase (162 aa).

Serine 11 provides a ligand contact to substrate. Residues serine 11 to phenylalanine 12 and histidine 19 contribute to the ATP site. The substrate site is built by lysine 43, threonine 75, and arginine 89. ATP contacts are provided by residues glycine 90–arginine 92, glutamate 100, and tyrosine 125–serine 131.

It belongs to the bacterial CoaD family. Homohexamer. Mg(2+) serves as cofactor.

It is found in the cytoplasm. The enzyme catalyses (R)-4'-phosphopantetheine + ATP + H(+) = 3'-dephospho-CoA + diphosphate. It participates in cofactor biosynthesis; coenzyme A biosynthesis; CoA from (R)-pantothenate: step 4/5. Its function is as follows. Reversibly transfers an adenylyl group from ATP to 4'-phosphopantetheine, yielding dephospho-CoA (dPCoA) and pyrophosphate. The polypeptide is Phosphopantetheine adenylyltransferase (Finegoldia magna (strain ATCC 29328 / DSM 20472 / WAL 2508) (Peptostreptococcus magnus)).